Consider the following 397-residue polypeptide: Tryptophan synthase beta chain (397 aa).

Lys87 carries the N6-(pyridoxal phosphate)lysine modification.

Belongs to the TrpB family. Tetramer of two alpha and two beta chains. Pyridoxal 5'-phosphate is required as a cofactor.

The enzyme catalyses (1S,2R)-1-C-(indol-3-yl)glycerol 3-phosphate + L-serine = D-glyceraldehyde 3-phosphate + L-tryptophan + H2O. It functions in the pathway amino-acid biosynthesis; L-tryptophan biosynthesis; L-tryptophan from chorismate: step 5/5. In terms of biological role, the beta subunit is responsible for the synthesis of L-tryptophan from indole and L-serine. In Escherichia coli O157:H7, this protein is Tryptophan synthase beta chain.